We begin with the raw amino-acid sequence, 146 residues long: MRLHLITVGEPKLAYARSGWDEYEKRLRRYHKVQVSRVSGKTQQAESEAILKAAGKSPLILLDPRGKQFSSEKLSEYLDAEALGGHGELAFAIGGPDGHTDALRGQAKLLWSLGELTLPHDLAMLVLVEALYRAATISAGEPYHRG.

S-adenosyl-L-methionine contacts are provided by residues Leu62, Gly94, and 113 to 118 (LGELTL).

Belongs to the RNA methyltransferase RlmH family. In terms of assembly, homodimer.

Its subcellular location is the cytoplasm. The enzyme catalyses pseudouridine(1915) in 23S rRNA + S-adenosyl-L-methionine = N(3)-methylpseudouridine(1915) in 23S rRNA + S-adenosyl-L-homocysteine + H(+). Functionally, specifically methylates the pseudouridine at position 1915 (m3Psi1915) in 23S rRNA. This is Ribosomal RNA large subunit methyltransferase H from Deinococcus radiodurans (strain ATCC 13939 / DSM 20539 / JCM 16871 / CCUG 27074 / LMG 4051 / NBRC 15346 / NCIMB 9279 / VKM B-1422 / R1).